We begin with the raw amino-acid sequence, 417 residues long: Glutamyl-tRNA reductase (417 aa).

Residues threonine 49–arginine 52, serine 107, glutamate 112–glutamine 114, and glutamine 118 contribute to the substrate site. The active-site Nucleophile is cysteine 50. Residue glycine 187–serine 192 participates in NADP(+) binding.

It belongs to the glutamyl-tRNA reductase family. In terms of assembly, homodimer.

It catalyses the reaction (S)-4-amino-5-oxopentanoate + tRNA(Glu) + NADP(+) = L-glutamyl-tRNA(Glu) + NADPH + H(+). Its pathway is porphyrin-containing compound metabolism; protoporphyrin-IX biosynthesis; 5-aminolevulinate from L-glutamyl-tRNA(Glu): step 1/2. In terms of biological role, catalyzes the NADPH-dependent reduction of glutamyl-tRNA(Glu) to glutamate 1-semialdehyde (GSA). This is Glutamyl-tRNA reductase from Cenarchaeum symbiosum (strain A).